The following is a 103-amino-acid chain: Small ribosomal subunit protein uS10 (103 aa).

Belongs to the universal ribosomal protein uS10 family. As to quaternary structure, part of the 30S ribosomal subunit.

Functionally, involved in the binding of tRNA to the ribosomes. The polypeptide is Small ribosomal subunit protein uS10 (Shewanella pealeana (strain ATCC 700345 / ANG-SQ1)).